We begin with the raw amino-acid sequence, 125 residues long: Type-4 ice-structuring protein (125 aa).

The N-terminal stretch at 1–20 (MKYTLIAAIVVLALAQGTLA) is a signal peptide.

This sequence belongs to the apolipoprotein A1/A4/E family.

It is found in the secreted. Antifreeze proteins lower the blood freezing point. This is Type-4 ice-structuring protein from Gadus morhua (Atlantic cod).